The chain runs to 281 residues: Undecaprenyl-diphosphatase (281 aa).

The next 7 helical transmembrane spans lie at 49-69 (SANTFKIVIQLGSIFAAAWIF), 92-112 (LHIFIGLIPAGIMGLLFDDFI), 116-136 (LFSVPTVLIGLALGALLMIAA), 152-172 (MTYKQALIIGVAQCLALWPGF), 196-216 (TFIMAVPIMFAASAKSLASNI), 224-244 (ILFYIVGFIAAFIFGVLSIRL), and 257-277 (FAIYRLILVAVIAVLYFGFGI).

It belongs to the UppP family.

The protein resides in the cell membrane. The enzyme catalyses di-trans,octa-cis-undecaprenyl diphosphate + H2O = di-trans,octa-cis-undecaprenyl phosphate + phosphate + H(+). Catalyzes the dephosphorylation of undecaprenyl diphosphate (UPP). Confers resistance to bacitracin. The protein is Undecaprenyl-diphosphatase of Macrococcus caseolyticus (strain JCSC5402) (Macrococcoides caseolyticum).